The sequence spans 455 residues: Mycosin-4 (455 aa).

An N-terminal signal peptide occupies residues 1 to 25 (MTTSRTLRLLVVSALATLSGLGTPV). In terms of domain architecture, Peptidase S8 spans 74–384 (SAQLADLDQV…NGTVDALAAV (311 aa)). Residues Asp98, His129, and Ser329 each act as charge relay system in the active site. Positions 389-417 (IPQAGTATSDPAPVAVPVPRRSTPGPSDR) are disordered. Over residues 394-412 (TATSDPAPVAVPVPRRSTP) the composition is skewed to low complexity. A helical transmembrane segment spans residues 432–452 (LALMATLATASRRLRPGRNGI).

It belongs to the peptidase S8 family.

It is found in the cell membrane. The chain is Mycosin-4 from Mycobacterium tuberculosis (strain ATCC 25618 / H37Rv).